The following is a 444-amino-acid chain: 4-O-dimethylallyl-L-tyrosine synthase (444 aa).

The protein belongs to the tryptophan dimethylallyltransferase family. In terms of assembly, homodimer.

It catalyses the reaction L-tyrosine + dimethylallyl diphosphate = 4-O-dimethylallyl-L-tyrosine + diphosphate. 4-O-dimethylallyl-L-tyrosine synthase; part of the gene cluster that mediates the biosynthesis of an unusual class of epipolythiodioxopiperazines (ETPs) lacking the reactive thiol group important for toxicity. Firstly, L-tyrosine is prenylated by tcpD, before undergoing condensation with L-glycine in a reaction catalyzed by the NRPS tcpP leading to the diketopiperazine (DKP) backbone. Afterwards the alpha-carbon of tyrosine is oxidized by the cytochrome P450 tcpC to form a hydroxyl group. However, in contrast other ETP biosynthesis pathways studied so far, tcpC is not able to bishydroxylate the DKP at both alpha-carbon positions, but hydroxylates the alpha-carbon of the tyrosine part and the nitrogen of the glycine part. The next steps involve an alpha,beta-elimination reaction catalyzed by tcpI, a methylation by the methyltransferase tcpN the action of the four enzyme cascade tcpG/K/J/I. Due to a dysfunctional cytochrome P450 monooxygenase tcpC, the pathway leads to the biosynthesis of probable non-toxic metabolites lacking the reactive thiol group. In Claviceps purpurea (strain 20.1) (Ergot fungus), this protein is 4-O-dimethylallyl-L-tyrosine synthase.